Here is a 336-residue protein sequence, read N- to C-terminus: Dihydroorotate dehydrogenase (quinone) (336 aa).

FMN-binding positions include 62-66 (AGLDK) and T86. K66 lines the substrate pocket. Residue 111 to 115 (NRMGF) coordinates substrate. FMN is bound by residues N139 and N172. N172 contacts substrate. S175 acts as the Nucleophile in catalysis. Residue N177 coordinates substrate. The FMN site is built by K217 and T245. Residue 246 to 247 (NT) participates in substrate binding. FMN-binding positions include G268, G297, and 318–319 (YS).

Belongs to the dihydroorotate dehydrogenase family. Type 2 subfamily. Monomer. FMN is required as a cofactor.

It localises to the cell membrane. It catalyses the reaction (S)-dihydroorotate + a quinone = orotate + a quinol. It participates in pyrimidine metabolism; UMP biosynthesis via de novo pathway; orotate from (S)-dihydroorotate (quinone route): step 1/1. Catalyzes the conversion of dihydroorotate to orotate with quinone as electron acceptor. This is Dihydroorotate dehydrogenase (quinone) from Escherichia coli O17:K52:H18 (strain UMN026 / ExPEC).